The primary structure comprises 1499 residues: Multidrug resistance protein CDR2 (1499 aa).

At 1–511 the chain is on the cytoplasmic side; sequence MSTANTSLSQ…NFLRMKGDPS (511 aa). Residues 148-402 form the ABC transporter 1 domain; the sequence is FTTEAINKLK…FENMGWKCPQ (255 aa). Transmembrane regions (helical) follow at residues 512–532, 546–566, 596–616, 621–641, 660–680, and 763–783; these read IPLISILSQLVMGLILASVFF, GALFFSVLFNAFSSLLEILSL, LPVKLLMTMSFNIVYYFMVNL, GNFFFYWLMCASCTLVMSHMF, VFLLAMIIYAGFVLPIPYILG, and FGITVAFAVFFLGVYVALTEF. The Cytoplasmic portion of the chain corresponds to 784 to 1193; that stretch reads NKGAMQKGEI…TIVQDWRSPG (410 aa). The ABC transporter 2 domain maps to 857 to 1101; it reads FFWRDLTYQV…MINYFEKYGA (245 aa). 893–900 is an ATP binding site; that stretch reads GASGAGKT. 6 helical membrane-spanning segments follow: residues 1194–1214, 1229–1249, 1279–1299, 1315–1335, 1354–1374, and 1465–1485; these read YIYSKLILVISSSLFIGFSFF, AVFMFFVPFTTFIDQMLPYFV, IPFQIVVGTISYFCWYYPVGL, LMWMLLTAFYVYTSTMGQLAI, LCLMFCGVLAGPNVIPGFWIF, and FGIFVAFIGINIILTIFFYWL.

It belongs to the ABC transporter superfamily. ABCG family. PDR (TC 3.A.1.205) subfamily.

The protein localises to the membrane. Functionally, multidrug efflux transporter. Confers resistance to azole antifungal agents, to other antifungals (terbinafine, amorolfine) and to a variety of metabolic inhibitors. The protein is Multidrug resistance protein CDR2 (CDR2) of Candida albicans (strain SC5314 / ATCC MYA-2876) (Yeast).